A 176-amino-acid chain; its full sequence is Cytochrome b (176 aa).

The next 3 helical transmembrane spans lie at 33–53 (FGSL…FLAM), 77–98 (WLLR…YLHI), and 113–133 (WNVG…GYVL). Heme b contacts are provided by His-83 and His-97.

Belongs to the cytochrome b family. As to quaternary structure, the cytochrome bc1 complex contains 11 subunits: 3 respiratory subunits (MT-CYB, CYC1 and UQCRFS1), 2 core proteins (UQCRC1 and UQCRC2) and 6 low-molecular weight proteins (UQCRH/QCR6, UQCRB/QCR7, UQCRQ/QCR8, UQCR10/QCR9, UQCR11/QCR10 and a cleavage product of UQCRFS1). This cytochrome bc1 complex then forms a dimer. It depends on heme b as a cofactor.

The protein localises to the mitochondrion inner membrane. In terms of biological role, component of the ubiquinol-cytochrome c reductase complex (complex III or cytochrome b-c1 complex) that is part of the mitochondrial respiratory chain. The b-c1 complex mediates electron transfer from ubiquinol to cytochrome c. Contributes to the generation of a proton gradient across the mitochondrial membrane that is then used for ATP synthesis. The protein is Cytochrome b (MT-CYB) of Eumops perotis (Western bonneted bat).